The primary structure comprises 107 residues: Phosphoribosyl-ATP pyrophosphatase (107 aa).

This sequence belongs to the PRA-PH family.

The protein localises to the cytoplasm. The catalysed reaction is 1-(5-phospho-beta-D-ribosyl)-ATP + H2O = 1-(5-phospho-beta-D-ribosyl)-5'-AMP + diphosphate + H(+). It functions in the pathway amino-acid biosynthesis; L-histidine biosynthesis; L-histidine from 5-phospho-alpha-D-ribose 1-diphosphate: step 2/9. This chain is Phosphoribosyl-ATP pyrophosphatase (hisE), found in Clostridium tetani (strain Massachusetts / E88).